The sequence spans 462 residues: tRNA modification GTPase MnmE (462 aa).

(6S)-5-formyl-5,6,7,8-tetrahydrofolate is bound by residues arginine 22, glutamate 87, and arginine 126. Residues 220-382 (GLKVAIVGRP…LARKVQEIVL (163 aa)) enclose the TrmE-type G domain. K(+) is bound at residue asparagine 230. GTP is bound by residues 230–235 (NVGKSS), 249–255 (SNIPGTT), and 274–277 (DTAG). Serine 234 is a binding site for Mg(2+). K(+) contacts are provided by serine 249, isoleucine 251, and threonine 254. Threonine 255 provides a ligand contact to Mg(2+). Lysine 462 serves as a coordination point for (6S)-5-formyl-5,6,7,8-tetrahydrofolate.

Belongs to the TRAFAC class TrmE-Era-EngA-EngB-Septin-like GTPase superfamily. TrmE GTPase family. In terms of assembly, homodimer. Heterotetramer of two MnmE and two MnmG subunits. K(+) serves as cofactor.

The protein resides in the cytoplasm. Exhibits a very high intrinsic GTPase hydrolysis rate. Involved in the addition of a carboxymethylaminomethyl (cmnm) group at the wobble position (U34) of certain tRNAs, forming tRNA-cmnm(5)s(2)U34. The sequence is that of tRNA modification GTPase MnmE from Moorella thermoacetica (strain ATCC 39073 / JCM 9320).